The primary structure comprises 464 residues: MTAQLSKKSEAWSARFNEPVSDLVKRYTASVFFDKRLAQVDIQGSLAHAEMLAHQKIISQQDHAEIQRGMAQIQEEIASGKFEWLLDLEDVHLNIEKRLTELVGDAGKRLHTGRSRNDQVATDIRLYVRSEIDNIVGLLRDLRLALLDLAEKHADTILPGFTHMQVAQPITFGHHMLAYVEMFSRDAERMLDCRKRVNRLPLGAAALAGTTFPIDRERVARTLDFEDVCHNSLDAVSDRDFAIEFCAAAALIMTHVSRMSEELVIWMSPRVGFIDIADRFCTGSSIMPQKKNPDVPELARGKTGRVNGHLIALLTLMKGQPLAYNKDNQEDKEPLFDTVDTVVDTLRIFADMATGITVKPDAMRAAALQGYATATDLADYLVKKGLPFRDAHEAVAHAVRACVDRGCDLSDLTLEEMRVFSPLIEADIFEVLTLEGSVAARNHIGGTAPQQVRLAIARHRSKLN.

This sequence belongs to the lyase 1 family. Argininosuccinate lyase subfamily.

It localises to the cytoplasm. The enzyme catalyses 2-(N(omega)-L-arginino)succinate = fumarate + L-arginine. It participates in amino-acid biosynthesis; L-arginine biosynthesis; L-arginine from L-ornithine and carbamoyl phosphate: step 3/3. The sequence is that of Argininosuccinate lyase from Janthinobacterium sp. (strain Marseille) (Minibacterium massiliensis).